A 533-amino-acid chain; its full sequence is Putative phosphate permease HP_1491 (533 aa).

12 helical membrane-spanning segments follow: residues 23 to 43, 47 to 67, 81 to 101, 129 to 149, 156 to 176, 182 to 202, 221 to 241, 248 to 268, 286 to 306, 338 to 358, 372 to 392, and 509 to 529; these read IALA…FGQA, GLLL…IGAN, AISM…GAII, VMLA…LIGA, SVVG…AVNW, IVAS…FFLM, VVPY…IVKV, LNFE…FILF, INEL…FAHG, VPLW…SLYG, LDKM…LLAS, and LVTV…LGFI.

Belongs to the inorganic phosphate transporter (PiT) (TC 2.A.20) family.

It localises to the cell membrane. In terms of biological role, potential transporter for phosphate. The chain is Putative phosphate permease HP_1491 from Helicobacter pylori (strain ATCC 700392 / 26695) (Campylobacter pylori).